A 533-amino-acid chain; its full sequence is Inositol-3-phosphate synthase (533 aa).

Thr-48 is modified (phosphothreonine). The NAD(+) site is built by Gly-74, Gly-75, Asn-76, Asn-77, and Asp-148. Ser-177 and Ser-184 each carry phosphoserine. Residues Ser-184, Ile-185, Gln-195, Asp-196, Arg-198, Thr-244, Ala-245, Asn-246, Thr-247, Gly-295, Ser-296, Asp-320, Leu-321, Ser-323, Asn-354, Asn-355, and Asp-356 each coordinate NAD(+). Ser-296 is modified (phosphoserine). Ser-368 carries the phosphoserine modification. Residue Lys-369 participates in NAD(+) binding. Ser-374 bears the Phosphoserine mark. NAD(+) is bound by residues Gly-409, Asp-410, Asp-438, and Ser-439.

This sequence belongs to the myo-inositol 1-phosphate synthase family. Homotetramer. The cofactor is NAD(+). Post-translationally, phosphorylation at Ser-184 and Ser-374 is associated with a decrease in activity. Increasingly phosphorylated in presence of valproate.

It is found in the cytoplasm. It carries out the reaction D-glucose 6-phosphate = 1D-myo-inositol 3-phosphate. It participates in polyol metabolism; myo-inositol biosynthesis; myo-inositol from D-glucose 6-phosphate: step 1/2. With respect to regulation, competitively inhibited by myo-2-inosose 1-phosphate, which is also an intermediate in the catalytic reaction. Competitively inhibited by 2-deoxy-myo-inositol 1-phosphate (dMIP), 1-deoxy-1-(phosphonomethyl)-myo-2-inosose (DPMI), dihydroxyacetone phosphate (DHAP), 6-deoxy-D-glucose 6-(E)-vinylhomophosphonate, 6-deoxy-D-glucitol 6-(E)-vinylhomophosphonate, 2,6-dideoxy-D-glucose 6-(E)-vinylhomophosphonate and 2,6-dideoxy-D-glucitol 6-(E)-vinylhomophosphonate. Inhibited by 2-deoxyglucitol 6-phosphate (dgtolP). Functionally, key enzyme in myo-inositol biosynthesis pathway that catalyzes the conversion of glucose 6-phosphate to 1-myo-inositol 1-phosphate in a NAD-dependent manner. Rate-limiting enzyme in the synthesis of all inositol-containing compounds. This Saccharomyces cerevisiae (strain ATCC 204508 / S288c) (Baker's yeast) protein is Inositol-3-phosphate synthase (INO1).